Reading from the N-terminus, the 324-residue chain is Putative transport protein TM_1187 (324 aa).

Helical transmembrane passes span 12–32 (LYLV…TALI), 62–82 (ISNV…FPVI), 105–125 (IPGW…EGAL), 131–151 (IVGY…TAFI), 190–210 (GGQV…AFIF), 227–247 (FVPY…AFSV), 252–272 (GLLI…WVLA), and 285–305 (FIIL…GVLI).

This sequence belongs to the autoinducer-2 exporter (AI-2E) (TC 2.A.86) family.

The protein localises to the cell membrane. In Thermotoga maritima (strain ATCC 43589 / DSM 3109 / JCM 10099 / NBRC 100826 / MSB8), this protein is Putative transport protein TM_1187.